Consider the following 123-residue polypeptide: Small ribosomal subunit protein uS8 (123 aa).

It belongs to the universal ribosomal protein uS8 family. Part of the 30S ribosomal subunit. Contacts proteins S5 and S12.

In terms of biological role, one of the primary rRNA binding proteins, it binds directly to 16S rRNA central domain where it helps coordinate assembly of the platform of the 30S subunit. The sequence is that of Small ribosomal subunit protein uS8 (rpsH) from Carsonella ruddii (strain PV).